We begin with the raw amino-acid sequence, 147 residues long: Hemoglobin subunit beta-H1 (147 aa).

Residues 3–147 enclose the Globin domain; it reads HFTAEEKAAI…VANALSHKYH (145 aa). Positions 64 and 93 each coordinate heme b.

The protein belongs to the globin family. In terms of assembly, heterotetramer of two alpha chains and two beta chains. As to expression, red blood cells.

In terms of biological role, this is an embryonic beta-type chain. This Mus musculus (Mouse) protein is Hemoglobin subunit beta-H1 (Hbb-bh1).